Consider the following 162-residue polypeptide: Small ribosomal subunit protein uS7m (162 aa).

It belongs to the universal ribosomal protein uS7 family. In terms of assembly, part of the small ribosomal subunit.

Its subcellular location is the mitochondrion. Its function is as follows. One of the primary rRNA binding proteins, it binds directly to 16S-like rRNA where it nucleates assembly of the head domain of the small subunit. The chain is Small ribosomal subunit protein uS7m (mrps7) from Dictyostelium citrinum (Slime mold).